The sequence spans 681 residues: GAS2-like protein 1 (681 aa).

Alanine 2 is modified (N-acetylalanine). One can recognise a Calponin-homology (CH) domain in the interval glutamate 27–alanine 148. 3 disordered regions span residues leucine 168 to aspartate 204, serine 278 to leucine 509, and alanine 536 to methionine 681. The segment covering glutamate 186–arginine 199 has biased composition (low complexity). Position 193 is a phosphothreonine (threonine 193). In terms of domain architecture, GAR spans serine 203–arginine 275. A compositionally biased stretch (polar residues) spans phenylalanine 291–arginine 303. 2 positions are modified to phosphoserine: serine 306 and serine 316. Positions serine 327–leucine 342 are enriched in basic and acidic residues. A Phosphothreonine modification is found at threonine 334. 2 positions are modified to phosphoserine: serine 352 and serine 355. Positions aspartate 354–glycine 365 are enriched in low complexity. Residues arginine 370–glutamate 381 show a composition bias toward basic and acidic residues. Phosphothreonine is present on threonine 391. At serine 394 the chain carries Phosphoserine. Positions glutamine 404–arginine 413 are enriched in basic and acidic residues. Phosphoserine is present on residues serine 436, serine 438, serine 479, and serine 486. The segment covering glutamine 437 to glutamine 454 has biased composition (basic and acidic residues). Low complexity predominate over residues proline 475 to proline 493. Residue arginine 487 is modified to Omega-N-methylarginine. Serine 490 and serine 492 each carry phosphoserine. Position 498 is a phosphothreonine (threonine 498). Arginine 504 carries the omega-N-methylarginine modification. Residues glycine 542–proline 556 show a composition bias toward pro residues. Residues aspartate 557–serine 571 are compositionally biased toward low complexity. Arginine 633 is subject to Omega-N-methylarginine. Positions glycine 634–proline 644 are enriched in basic and acidic residues. Serine 657 carries the phosphoserine modification.

The protein belongs to the GAS2 family. As to quaternary structure, interacts with MAPRE1.

It is found in the cytoplasm. Its subcellular location is the cytoskeleton. The protein resides in the stress fiber. Functionally, involved in the cross-linking of microtubules and microfilaments. Regulates microtubule dynamics and stability by interacting with microtubule plus-end tracking proteins, such as MAPRE1, to regulate microtubule growth along actin stress fibers. The sequence is that of GAS2-like protein 1 (GAS2L1) from Homo sapiens (Human).